The sequence spans 295 residues: Glycine--tRNA ligase alpha subunit (295 aa).

Belongs to the class-II aminoacyl-tRNA synthetase family. Tetramer of two alpha and two beta subunits.

The protein localises to the cytoplasm. The catalysed reaction is tRNA(Gly) + glycine + ATP = glycyl-tRNA(Gly) + AMP + diphosphate. The protein is Glycine--tRNA ligase alpha subunit of Prochlorococcus marinus (strain MIT 9215).